A 357-amino-acid chain; its full sequence is Holliday junction branch migration complex subunit RuvB (357 aa).

The span at 1-15 (MAIQSDSLSSLPDSP) shows a compositional bias: low complexity. The disordered stretch occupies residues 1–30 (MAIQSDSLSSLPDSPRIVAPQPVSPNEESI). A large ATPase domain (RuvB-L) region spans residues 13–195 (DSPRIVAPQP…FGIVSRLEFY (183 aa)). ATP contacts are provided by residues Leu-34, Arg-35, Gly-76, Lys-79, Thr-80, Thr-81, 142 to 144 (EDF), Arg-185, Tyr-195, and Arg-232. Thr-80 serves as a coordination point for Mg(2+). Residues 196 to 266 (NTDELARIVT…AAGRALAMLD (71 aa)) are small ATPAse domain (RuvB-S). The tract at residues 269 to 357 (PQGLDVMDRK…SGGTGELFSK (89 aa)) is head domain (RuvB-H). DNA is bound by residues Arg-305, Arg-324, and Arg-329.

It belongs to the RuvB family. In terms of assembly, homohexamer. Forms an RuvA(8)-RuvB(12)-Holliday junction (HJ) complex. HJ DNA is sandwiched between 2 RuvA tetramers; dsDNA enters through RuvA and exits via RuvB. An RuvB hexamer assembles on each DNA strand where it exits the tetramer. Each RuvB hexamer is contacted by two RuvA subunits (via domain III) on 2 adjacent RuvB subunits; this complex drives branch migration. In the full resolvosome a probable DNA-RuvA(4)-RuvB(12)-RuvC(2) complex forms which resolves the HJ.

The protein resides in the cytoplasm. The catalysed reaction is ATP + H2O = ADP + phosphate + H(+). In terms of biological role, the RuvA-RuvB-RuvC complex processes Holliday junction (HJ) DNA during genetic recombination and DNA repair, while the RuvA-RuvB complex plays an important role in the rescue of blocked DNA replication forks via replication fork reversal (RFR). RuvA specifically binds to HJ cruciform DNA, conferring on it an open structure. The RuvB hexamer acts as an ATP-dependent pump, pulling dsDNA into and through the RuvAB complex. RuvB forms 2 homohexamers on either side of HJ DNA bound by 1 or 2 RuvA tetramers; 4 subunits per hexamer contact DNA at a time. Coordinated motions by a converter formed by DNA-disengaged RuvB subunits stimulates ATP hydrolysis and nucleotide exchange. Immobilization of the converter enables RuvB to convert the ATP-contained energy into a lever motion, pulling 2 nucleotides of DNA out of the RuvA tetramer per ATP hydrolyzed, thus driving DNA branch migration. The RuvB motors rotate together with the DNA substrate, which together with the progressing nucleotide cycle form the mechanistic basis for DNA recombination by continuous HJ branch migration. Branch migration allows RuvC to scan DNA until it finds its consensus sequence, where it cleaves and resolves cruciform DNA. The protein is Holliday junction branch migration complex subunit RuvB of Bordetella bronchiseptica (strain ATCC BAA-588 / NCTC 13252 / RB50) (Alcaligenes bronchisepticus).